A 726-amino-acid polypeptide reads, in one-letter code: Methionine--tRNA ligase (726 aa).

The 'HIGH' region signature appears at 12 to 22 (PYVNNIPHLGN). Zn(2+) contacts are provided by Cys-143, Cys-146, Cys-155, and Cys-158. Positions 330-334 (KFSKS) match the 'KMSKS' region motif. Lys-333 contributes to the ATP binding site. The region spanning 562–667 (FSEQICLKTV…DNPIPGERVI (106 aa)) is the tRNA-binding domain.

The protein belongs to the class-I aminoacyl-tRNA synthetase family. MetG type 1 subfamily. As to quaternary structure, homodimer. Zn(2+) is required as a cofactor.

Its subcellular location is the cytoplasm. It carries out the reaction tRNA(Met) + L-methionine + ATP = L-methionyl-tRNA(Met) + AMP + diphosphate. Is required not only for elongation of protein synthesis but also for the initiation of all mRNA translation through initiator tRNA(fMet) aminoacylation. The chain is Methionine--tRNA ligase from Borrelia recurrentis (strain A1).